Reading from the N-terminus, the 86-residue chain is Anti-adapter protein IraP (86 aa).

The stretch at 1–36 forms a coiled coil; the sequence is MKNLIAELLFKLAQKEEESKELCAQVEALEIIVTAM.

It belongs to the IraP family. In terms of assembly, interacts with RssB.

The protein resides in the cytoplasm. Functionally, inhibits RpoS proteolysis by regulating RssB activity, thereby increasing the stability of the sigma stress factor RpoS especially during phosphate starvation, but also in stationary phase and during nitrogen starvation. Its effect on RpoS stability is due to its interaction with RssB, which probably blocks the interaction of RssB with RpoS, and the consequent delivery of the RssB-RpoS complex to the ClpXP protein degradation pathway. This is Anti-adapter protein IraP from Escherichia coli O7:K1 (strain IAI39 / ExPEC).